The sequence spans 295 residues: Tyrosine recombinase XerC (295 aa).

The Core-binding (CB) domain occupies 1 to 84 (MTLEEQFLSY…SLKSFYRLLT (84 aa)). The Tyr recombinase domain maps to 105–289 (KLPEFFYQDE…SMQHLTAEYR (185 aa)). Active-site residues include Arg-145, Lys-169, His-241, Arg-244, and His-267. Catalysis depends on Tyr-276, which acts as the O-(3'-phospho-DNA)-tyrosine intermediate.

This sequence belongs to the 'phage' integrase family. XerC subfamily. In terms of assembly, forms a cyclic heterotetrameric complex composed of two molecules of XerC and two molecules of XerD.

It is found in the cytoplasm. Site-specific tyrosine recombinase, which acts by catalyzing the cutting and rejoining of the recombining DNA molecules. The XerC-XerD complex is essential to convert dimers of the bacterial chromosome into monomers to permit their segregation at cell division. It also contributes to the segregational stability of plasmids. This is Tyrosine recombinase XerC from Lactobacillus leichmannii.